The following is a 524-amino-acid chain: Glutamyl-tRNA(Gln) amidotransferase subunit A (524 aa).

Active-site charge relay system residues include K109 and S184. Residue S208 is the Acyl-ester intermediate of the active site.

This sequence belongs to the amidase family. GatA subfamily. Heterotrimer of A, B and C subunits.

The catalysed reaction is L-glutamyl-tRNA(Gln) + L-glutamine + ATP + H2O = L-glutaminyl-tRNA(Gln) + L-glutamate + ADP + phosphate + H(+). Allows the formation of correctly charged Gln-tRNA(Gln) through the transamidation of misacylated Glu-tRNA(Gln) in organisms which lack glutaminyl-tRNA synthetase. The reaction takes place in the presence of glutamine and ATP through an activated gamma-phospho-Glu-tRNA(Gln). In Tropheryma whipplei (strain Twist) (Whipple's bacillus), this protein is Glutamyl-tRNA(Gln) amidotransferase subunit A.